Here is a 572-residue protein sequence, read N- to C-terminus: uncharacterized protein (572 aa).

Residues 553–572 (PSPAPKPVTVRKKKGNSPIS) form a disordered region. Residues 561 to 572 (TVRKKKGNSPIS) show a composition bias toward basic residues.

This is an uncharacterized protein from Homo sapiens (Human).